Consider the following 399-residue polypeptide: Elongation factor Tu (399 aa).

The tr-type G domain occupies 10-208 (KPHVNIGTIG…TVDSYIPEPE (199 aa)). The segment at 19–26 (GHVDHGKT) is G1. 19-26 (GHVDHGKT) serves as a coordination point for GTP. Mg(2+) is bound at residue threonine 26. The segment at 64-68 (GITIN) is G2. Positions 85–88 (DAPG) are G3. GTP contacts are provided by residues 85-89 (DAPGH) and 140-143 (NKVD). Residues 140–143 (NKVD) form a G4 region. The interval 178–180 (SAL) is G5.

Belongs to the TRAFAC class translation factor GTPase superfamily. Classic translation factor GTPase family. EF-Tu/EF-1A subfamily. As to quaternary structure, monomer.

Its subcellular location is the cytoplasm. The catalysed reaction is GTP + H2O = GDP + phosphate + H(+). GTP hydrolase that promotes the GTP-dependent binding of aminoacyl-tRNA to the A-site of ribosomes during protein biosynthesis. This Streptococcus pyogenes serotype M12 (strain MGAS2096) protein is Elongation factor Tu.